We begin with the raw amino-acid sequence, 543 residues long: Putative fatty acyl-CoA reductase CG8303 (543 aa).

The segment at 1 to 29 (MAVITEHGGTTSSPPENNNSIGNGKHRVN) is disordered. Over residues 8–22 (GGTTSSPPENNNSIG) the composition is skewed to polar residues. 3 consecutive transmembrane segments (helical) span residues 386–406 (LFFY…EKLF), 500–520 (VFNV…YFAL), and 522–542 (LTLG…FLVW).

This sequence belongs to the fatty acyl-CoA reductase family.

Its subcellular location is the membrane. The catalysed reaction is a long-chain fatty acyl-CoA + 2 NADPH + 2 H(+) = a long-chain primary fatty alcohol + 2 NADP(+) + CoA. It carries out the reaction hexadecanoyl-CoA + 2 NADPH + 2 H(+) = hexadecan-1-ol + 2 NADP(+) + CoA. The enzyme catalyses octadecanoyl-CoA + 2 NADPH + 2 H(+) = octadecan-1-ol + 2 NADP(+) + CoA. Catalyzes the reduction of C16 or C18 fatty acyl-CoA to fatty alcohols. The chain is Putative fatty acyl-CoA reductase CG8303 from Drosophila melanogaster (Fruit fly).